The sequence spans 168 residues: Large ribosomal subunit protein uL5 (168 aa).

Belongs to the universal ribosomal protein uL5 family. In terms of assembly, part of the 50S ribosomal subunit; contacts the 5S rRNA and probably tRNA. Forms a bridge to the 30S subunit in the 70S ribosome.

Functionally, this is one of the proteins that bind and probably mediate the attachment of the 5S RNA into the large ribosomal subunit, where it forms part of the central protuberance. In the 70S ribosome it contacts protein S13 of the 30S subunit (bridge B1b), connecting the 2 subunits; this bridge is implicated in subunit movement. May contact the P site tRNA; the 5S rRNA and some of its associated proteins might help stabilize positioning of ribosome-bound tRNAs. This is Large ribosomal subunit protein uL5 from Methanosphaera stadtmanae (strain ATCC 43021 / DSM 3091 / JCM 11832 / MCB-3).